Consider the following 77-residue polypeptide: Small integral membrane protein 5 (77 aa).

Residues 32–52 (IVAFSVIILFTATVLLLLLIA) form a helical membrane-spanning segment.

It localises to the membrane. The sequence is that of Small integral membrane protein 5 (SMIM5) from Homo sapiens (Human).